Here is a 268-residue protein sequence, read N- to C-terminus: F-actin-capping protein subunit beta (268 aa).

Belongs to the F-actin-capping protein beta subunit family. In terms of assembly, component of the F-actin capping complex, composed of a heterodimer of an alpha and a beta subunit.

The protein localises to the cytoplasm. The protein resides in the cytoskeleton. It is found in the actin patch. Its subcellular location is the nucleus. F-actin-capping proteins bind in a Ca(2+)-independent manner to the fast growing ends of actin filaments (barbed end) thereby blocking the exchange of subunits at these ends. Unlike other capping proteins (such as gelsolin and severin), these proteins do not sever actin filaments. Competes with formin cdc12 for attachment to the actin filaments barbed ends. Slowly replaces cdc12 on the barbed ends in preparation for filament disassembly during contractile ring constriction. The protein is F-actin-capping protein subunit beta (acp2) of Schizosaccharomyces pombe (strain 972 / ATCC 24843) (Fission yeast).